The chain runs to 144 residues: C-type isolectin Sp-CL4 (144 aa).

The 118-residue stretch at 27-144 (DENRKVKYFE…CSEKLPFMCA (118 aa)) folds into the C-type lectin domain. 2 disulfides stabilise this stretch: C48–C143 and C119–C135.

This sequence belongs to the true venom lectin family. Post-translationally, glycosylated with a carbohydrate of 383 Da. Expressed by the venom gland.

It is found in the secreted. Functionally, the role of this hemagglutinin in the venom is unknown, because it is masked by the high venom hemolytic activity. Lectin with specificity to galactose. Induces hemagglutination. The sequence is that of C-type isolectin Sp-CL4 from Scorpaena plumieri (Spotted scorpionfish).